We begin with the raw amino-acid sequence, 378 residues long: Erythronate-4-phosphate dehydrogenase (378 aa).

Substrate is bound by residues S45 and T66. The NAD(+) site is built by D146 and T175. R208 is an active-site residue. NAD(+) is bound at residue D232. E237 is an active-site residue. H254 acts as the Proton donor in catalysis. G257 serves as a coordination point for NAD(+). Residue Y258 participates in substrate binding.

This sequence belongs to the D-isomer specific 2-hydroxyacid dehydrogenase family. PdxB subfamily. As to quaternary structure, homodimer.

The protein localises to the cytoplasm. It carries out the reaction 4-phospho-D-erythronate + NAD(+) = (R)-3-hydroxy-2-oxo-4-phosphooxybutanoate + NADH + H(+). It functions in the pathway cofactor biosynthesis; pyridoxine 5'-phosphate biosynthesis; pyridoxine 5'-phosphate from D-erythrose 4-phosphate: step 2/5. Functionally, catalyzes the oxidation of erythronate-4-phosphate to 3-hydroxy-2-oxo-4-phosphonooxybutanoate. The chain is Erythronate-4-phosphate dehydrogenase from Salmonella paratyphi A (strain ATCC 9150 / SARB42).